Consider the following 199-residue polypeptide: 7-methyl-GTP pyrophosphatase (199 aa).

Residue Asp74 is the Proton acceptor of the active site.

Belongs to the Maf family. YceF subfamily. A divalent metal cation is required as a cofactor.

The protein localises to the cytoplasm. The catalysed reaction is N(7)-methyl-GTP + H2O = N(7)-methyl-GMP + diphosphate + H(+). Functionally, nucleoside triphosphate pyrophosphatase that hydrolyzes 7-methyl-GTP (m(7)GTP). May have a dual role in cell division arrest and in preventing the incorporation of modified nucleotides into cellular nucleic acids. The polypeptide is 7-methyl-GTP pyrophosphatase (Cupriavidus pinatubonensis (strain JMP 134 / LMG 1197) (Cupriavidus necator (strain JMP 134))).